Consider the following 282-residue polypeptide: NADPH-dependent 7-cyano-7-deazaguanine reductase (282 aa).

90–92 (IES) contacts substrate. Residue 92–93 (SK) participates in NADPH binding. Catalysis depends on Cys-190, which acts as the Thioimide intermediate. The active-site Proton donor is the Asp-197. 229–230 (HE) is a substrate binding site. 258–259 (RG) is an NADPH binding site.

The protein belongs to the GTP cyclohydrolase I family. QueF type 2 subfamily. In terms of assembly, homodimer.

It is found in the cytoplasm. It catalyses the reaction 7-aminomethyl-7-carbaguanine + 2 NADP(+) = 7-cyano-7-deazaguanine + 2 NADPH + 3 H(+). It functions in the pathway tRNA modification; tRNA-queuosine biosynthesis. Functionally, catalyzes the NADPH-dependent reduction of 7-cyano-7-deazaguanine (preQ0) to 7-aminomethyl-7-deazaguanine (preQ1). The sequence is that of NADPH-dependent 7-cyano-7-deazaguanine reductase from Aeromonas salmonicida (strain A449).